The primary structure comprises 87 residues: Large ribosomal subunit protein bL31B-2/bL31B-3 (87 aa).

Belongs to the bacterial ribosomal protein bL31 family. Type B subfamily. In terms of assembly, part of the 50S ribosomal subunit.

The sequence is that of Large ribosomal subunit protein bL31B-2/bL31B-3 (rpmE2-2) from Escherichia coli O157:H7.